Here is a 496-residue protein sequence, read N- to C-terminus: Angiopoietin-2 (496 aa).

A signal peptide spans 1–18; that stretch reads MWQIVFLTFGCDLVLASA. Residues Asn-89, Asn-119, Asn-133, Asn-151, Asn-240, and Asn-304 are each glycosylated (N-linked (GlcNAc...) asparagine). The stretch at 159 to 256 forms a coiled coil; that stretch reads QLLQHSISTN…QQHDLMETVN (98 aa). The Fibrinogen C-terminal domain occupies 280–496; it reads TFRDCAEIFK…TTMMIRPADF (217 aa). Residues Cys-284 and Cys-313 are joined by a disulfide bond. Residues Asp-429, Asp-431, Cys-433, and Cys-435 each contribute to the Ca(2+) site. 2 cysteine pairs are disulfide-bonded: Cys-433–Cys-435 and Cys-437–Cys-450.

In terms of assembly, interacts with TEK/TIE2, competing for the same binding site as ANGPT1. Interacts with ITGA5. Interacts with SVEP1/polydom. Interacts with THBD; this interaction significantly inhibits the generation of activated PC and TAFIa/CPB2 by the thrombin/thrombomodulin complex.

The protein resides in the secreted. Its function is as follows. Binds to TEK/TIE2, competing for the ANGPT1 binding site, and modulating ANGPT1 signaling. Can induce tyrosine phosphorylation of TEK/TIE2 in the absence of ANGPT1. In the absence of angiogenic inducers, such as VEGF, ANGPT2-mediated loosening of cell-matrix contacts may induce endothelial cell apoptosis with consequent vascular regression. In concert with VEGF, it may facilitate endothelial cell migration and proliferation, thus serving as a permissive angiogenic signal. Involved in the regulation of lymphangiogenesis. In Rattus norvegicus (Rat), this protein is Angiopoietin-2 (Angpt2).